A 438-amino-acid chain; its full sequence is MSKIRVVHYINQFFAGVGGEEKADIEPFIAESLPPVSQSLSNLIKDEAEVVGTVVCGDSYFGENLVEAKNRILEMIKSFNPDIVVAGPAFNAGRYGVAAATVTKAVQDELGIPAVTGMYIENPGADMFKKYAYIISTGNSAAAMRTALPAMAKFAMKLAKGEEIGGPVAEGYIERGIRFNMFKEDRGAKRAVAMLVKKLKGEEYETEYPMPSFDKVEPGKAIKDMSKAKIAIVTSGGIVPKGNPDRIESSSASKYGKYDIQGIDDLTSEGWETAHGGHDPIYANEDADRVIPVDVLRDMEKEGVIGELHRYFYSTTGNGTAVASSKKFAEEFTKELVADGVDAVILTSTUGTCTRCGASMVKEIERSGIPVVHIATVTPISLTVGANRIVPAIAIPHPLGNPALSHEEEKALRRKIVEKALEALQTEVEEQTVFERNY.

Sec-350 is an active-site residue. Position 350 (Sec-350) is a non-standard amino acid, selenocysteine.

The protein belongs to the GrdB/GrdF/GrdH family. As to quaternary structure, heterohexamer of two alpha, two beta and two gamma subunits. Component of the glycine reductase complex, together with components A and C. PB is substrate specific.

It catalyses the reaction acetyl phosphate + [thioredoxin]-disulfide + NH4(+) + H2O = [thioredoxin]-dithiol + glycine + phosphate + H(+). In the first step of glycine reductase, the substrate is bound to component PB via a Schiff base intermediate. Then the PB-activated substrate is nucleophilically attacked by the selenol anion of component PA to transform it to a carboxymethylated selenoether and the respective amine. By action of component PC, acetyl phosphate is formed, leaving component PA in its oxidized state. Finally component PA becomes reduced by the thioredoxin system to start a new catalytic cycle of reductive deamination. This Peptoclostridium acidaminophilum (Eubacterium acidaminophilum) protein is Glycine reductase complex component B subunit gamma (grdB).